The chain runs to 188 residues: Phospholipase A2 inhibitor 31 kDa subunit (188 aa).

Disulfide bonds link Cys-3–Cys-27, Cys-6–Cys-13, Cys-20–Cys-48, Cys-54–Cys-75, Cys-76–Cys-81, Cys-99–Cys-124, Cys-117–Cys-146, and Cys-150–Cys-172. A glycan (N-linked (GlcNAc...) asparagine) is linked at Asn-157.

The protein belongs to the CNF-like-inhibitor family. As to quaternary structure, heterodimer with phospholipase A2 inhibitor 25 kDa. Post-translationally, N-glycosylated. As to expression, expressed by the liver.

The protein localises to the secreted. In terms of biological role, inhibits the enzymatic activity of phospholipase A2. In Naja kaouthia (Monocled cobra), this protein is Phospholipase A2 inhibitor 31 kDa subunit.